The sequence spans 631 residues: DNA ligase (631 aa).

Residues 37–41 (DAHYD) and 79–80 (ST) contribute to the NAD(+) site. Lysine 115 functions as the N6-AMP-lysine intermediate in the catalytic mechanism. The NAD(+) site is built by arginine 131, glutamate 160, and lysine 272. Zn(2+)-binding residues include cysteine 361, cysteine 364, cysteine 377, and cysteine 382. In terms of domain architecture, BRCT spans 539–630 (DVSSPISGKG…SQSSPEQMSL (92 aa)).

The protein belongs to the NAD-dependent DNA ligase family. LigA subfamily. Mg(2+) serves as cofactor. It depends on Mn(2+) as a cofactor.

The enzyme catalyses NAD(+) + (deoxyribonucleotide)n-3'-hydroxyl + 5'-phospho-(deoxyribonucleotide)m = (deoxyribonucleotide)n+m + AMP + beta-nicotinamide D-nucleotide.. Its function is as follows. DNA ligase that catalyzes the formation of phosphodiester linkages between 5'-phosphoryl and 3'-hydroxyl groups in double-stranded DNA using NAD as a coenzyme and as the energy source for the reaction. It is essential for DNA replication and repair of damaged DNA. The sequence is that of DNA ligase from Desulfatibacillum aliphaticivorans.